We begin with the raw amino-acid sequence, 786 residues long: DENN domain-containing protein 1C (786 aa).

Residues 13 to 158 (FDWFFEAGCP…MDSSITVRSE (146 aa)) form the uDENN domain. The 137-residue stretch at 182–318 (SLPSIPENRN…VVSLLRLRLR (137 aa)) folds into the cDENN domain. A dDENN domain is found at 320-398 (VALSPGEGVS…ESRLEKLNAG (79 aa)). Residues 401–405 (FSDQF) carry the FXDXF motif motif. The tract at residues 481–553 (KDGDSGLQRG…LSPGDTQNPW (73 aa)) is disordered. Positions 527–541 (LKTEEGPSEPLRERS) are enriched in basic and acidic residues. Positions 542–552 (PTLSPGDTQNP) are enriched in polar residues. A Phosphoserine modification is found at Ser565. The Clathrin box signature appears at 570-579 (DLLSEILDSL). Disordered stretches follow at residues 653-741 (YSKN…QPPQ) and 762-786 (SHVS…CFEN). The span at 657-675 (SCSQPFQQSPPSQGDPGPS) shows a compositional bias: low complexity. Residues 706-740 (LLVSTEPNSDAVQRLQSISSPSCSHSAENPRNQPP) show a composition bias toward polar residues. Over residues 770 to 786 (PQDKQPRVADLKKCFEN) the composition is skewed to basic and acidic residues.

Exhibits low nucleotide-independent RAB35-binding activity. Interacts with clathrin heavy chain/CLTC and with AP2A2, but not with AP2B1.

It is found in the cytoplasm. The protein localises to the cytosol. It localises to the cytoplasmic vesicle. The protein resides in the clathrin-coated vesicle. Guanine nucleotide exchange factor (GEF) which may activate RAB8A, RAB13 and RAB35. Promotes the exchange of GDP to GTP, converting inactive GDP-bound Rab proteins into their active GTP-bound form. The sequence is that of DENN domain-containing protein 1C (Dennd1c) from Mus musculus (Mouse).